The sequence spans 516 residues: Circadian clock oscillator protein KaiC (516 aa).

KaiC domains lie at Met-1 to Phe-244 and Ala-258 to Glu-516. Gly-46, Thr-47, Gly-48, Lys-49, Thr-50, Leu-51, Ser-86, Lys-221, Leu-222, Arg-223, Thr-225, His-227, Thr-237, Thr-287, Gly-288, Thr-289, Gly-290, Lys-291, Thr-292, and Leu-293 together coordinate ATP. Residue Thr-50 coordinates Mg(2+). Residue Thr-292 coordinates Mg(2+). Glu-315 lines the Mg(2+) pocket. An ATP-binding site is contributed by Trp-328. At Ser-428 the chain carries Phosphoserine; by autocatalysis. Thr-429 is modified (phosphothreonine; by autocatalysis). ATP contacts are provided by Arg-448, Lys-454, Met-455, Arg-456, Ser-458, His-460, and Lys-462.

The protein belongs to the KaiC family. Homohexamer; hexamerization is dependent on ATP-binding. The KaiABC complex composition changes during the circadian cycle to control KaiC phosphorylation. Complexes KaiC(6), KaiA(2-4):KaiC(6), KaiB(6):KaiC(6) and KaiC(6):KaiB(6):KaiA(12) are among the most important forms, many form cooperatively. KaiC interacts with SasA, activating its autokinase function and leading to RpaA activation. Requires Mg(2+) as cofactor. Post-translationally, phosphorylated on serine and threonine residues by autocatalysis. Has a 4 step phosphorylation cycle; the autokinase acts first on Thr-429, then Ser-428. When Ser-428 is modified KaiC switches to an autophosphatase mode, acting first on phospho-Thr-429 then phospho-Ser-428.

It carries out the reaction L-seryl-[protein] + ATP = O-phospho-L-seryl-[protein] + ADP + H(+). The enzyme catalyses L-threonyl-[protein] + ATP = O-phospho-L-threonyl-[protein] + ADP + H(+). It catalyses the reaction ATP + H2O = ADP + phosphate + H(+). Its activity is regulated as follows. The interaction with KaiA enhances its phosphorylation status, while the interaction with KaiB decreases it. Functionally, central component of the KaiABC oscillator complex, which constitutes the main circadian regulator in cyanobacteria. Complex composition changes during the circadian cycle to control KaiC phosphorylation. KaiA stimulates KaiC autophosphorylation, while KaiB sequesters KaiA, leading to KaiC autodephosphorylation. Clock output pathways impact the RpaA transcriptional regulator. KaiC enhances the autophosphorylation activity of SasA, which then transfers its phosphate group to RpaA to activate it. KaiB and KaiC together enhance the phospho-RpaA dephosphatase activity of CikA. In terms of biological role, has a weak, temperature-independent ATPase activity; ATPase activity defines the circadian period. The phosphorylation state of KaiC modulates its ATPase activity and effects KaiB binding. The polypeptide is Circadian clock oscillator protein KaiC (Picosynechococcus sp. (strain ATCC 27264 / PCC 7002 / PR-6) (Agmenellum quadruplicatum)).